A 624-amino-acid chain; its full sequence is Prickle planar cell polarity protein 3 (624 aa).

Residues methionine 1 to glycine 12 show a composition bias toward basic residues. The disordered stretch occupies residues methionine 1 to proline 26. A PET domain is found at serine 74–threonine 182. 3 LIM zinc-binding domains span residues alanine 184 to proline 249, arginine 250 to glutamate 309, and tyrosine 310 to threonine 373. A disordered region spans residues glutamate 371–arginine 617. The span at serine 383–serine 409 shows a compositional bias: low complexity. Pro residues predominate over residues proline 447–alanine 458. Phosphoserine occurs at positions 475 and 491. Positions serine 509–histidine 541 are enriched in basic residues. Low complexity predominate over residues leucine 545–glutamate 564. Positions arginine 587–alanine 601 are enriched in polar residues.

The protein belongs to the prickle / espinas / testin family. As to quaternary structure, interacts with VANGL2 via its C-terminus. The VANGL2-dependent membrane recruitment of PRICKLE3 is a prerequisite for its polarization. Interacts with WTIP. WTIP is involved in the recruitment of PRICKLE3 to the basal body. Interacts with MT-ATP8, a component of the mitochondrial complex V. In terms of tissue distribution, widely expressed.

It localises to the cytoplasm. It is found in the cell membrane. Its subcellular location is the mitochondrion. Functionally, involved in the planar cell polarity (PCP) pathway that is essential for the polarization of epithelial cells during morphogenetic processes, including gastrulation and neurulation. PCP is maintained by two molecular modules, the global and the core modules, PRICKLE3 being part of the core module. Distinct complexes of the core module segregate to opposite sides of the cell, where they interact with the opposite complex in the neighboring cell at or near the adherents junctions. Involved in the organization of the basal body. Involved in cilia growth and positioning. Required for proper assembly, stability, and function of mitochondrial membrane ATP synthase (mitochondrial complex V). The polypeptide is Prickle planar cell polarity protein 3 (Mus musculus (Mouse)).